A 166-amino-acid chain; its full sequence is Myosin regulatory light chain 2, ventricular/cardiac muscle isoform (166 aa).

Position 2 is a n,N,N-trimethylalanine (Ala-2). Ser-14 and Ser-15 each carry phosphoserine; by MLCK. The residue at position 19 (Ser-19) is a Phosphoserine. EF-hand domains lie at 24-59 (TQIQ…LGRV), 94-129 (DPEE…QAER), and 130-165 (FSKE…GEEK). Asp-37, Asn-39, Asp-41, and Asp-48 together coordinate Ca(2+). Thr-52 is modified (phosphothreonine).

Myosin is a hexamer of 2 heavy chains and 4 light chains. Interacts with MYOC. Post-translationally, N-terminus is methylated by METTL11A/NTM1. In terms of processing, phosphorylated by MYLK3 and MYLK2; promotes cardiac muscle contraction and function. Dephosphorylated by PPP1CB complexed to PPP1R12B. The phosphorylated form in adult is expressed as gradients across the heart from endocardium (low phosphorylation) to epicardium (high phosphorylation); regulates cardiac torsion and workload distribution. As to expression, abundantly expressed in both cardiac and slow skeletal muscle. In the adult heart, the phosphorylated form is highly expressed in epicardium and weakly in endocardium.

It is found in the cytoplasm. The protein localises to the myofibril. It localises to the sarcomere. Its subcellular location is the a band. Contractile protein that plays a role in heart development and function. Following phosphorylation, plays a role in cross-bridge cycling kinetics and cardiac muscle contraction by increasing myosin lever arm stiffness and promoting myosin head diffusion; as a consequence of the increase in maximum contraction force and calcium sensitivity of contraction force. These events altogether slow down myosin kinetics and prolong duty cycle resulting in accumulated myosins being cooperatively recruited to actin binding sites to sustain thin filament activation as a means to fine-tune myofilament calcium sensitivity to force. During cardiogenesis plays an early role in cardiac contractility by promoting cardiac myofibril assembly. This is Myosin regulatory light chain 2, ventricular/cardiac muscle isoform from Mus musculus (Mouse).